The following is a 944-amino-acid chain: Serine/threonine-protein kinase PLK4 (944 aa).

Residues 12–265 (FKVLNLLGKG…LSSVLDHAFM (254 aa)) enclose the Protein kinase domain. Residues 18–26 (LGKGSFACV) and lysine 41 contribute to the ATP site. Aspartate 136 serves as the catalytic Proton acceptor. Disordered stretches follow at residues 327 to 396 (KDKH…YSER), 432 to 463 (RSLE…RSND), and 530 to 561 (LGIK…QQAF). Polar residues predominate over residues 378-394 (RSGTSQSQTYAKPSSYS). The segment covering 432 to 447 (RSLERHTSPPVKEKTP) has biased composition (basic and acidic residues). Over residues 548 to 561 (FGEQSKSRVPQQAF) the composition is skewed to polar residues. One can recognise a Cryptic POLO box 1 (CPB1) domain in the interval 565-678 (TLRSIISPLN…AKFIKLVRSK (114 aa)). Residues 679–791 (TPKVTYYTRY…GRRPALAESP (113 aa)) form the Cryptic POLO box 2 (CPB2) domain. The disordered stretch occupies residues 786–809 (ALAESPKTQPTPSVDSARERKEEQ). In terms of domain architecture, POLO box spans 862 to 940 (QVLKSVFVEN…LSSILMLFAS (79 aa)).

It belongs to the protein kinase superfamily. Ser/Thr protein kinase family. CDC5/Polo subfamily. As to quaternary structure, homodimer. In terms of processing, ubiquitinated; leading to its degradation by the proteasome.

The protein resides in the cytoplasm. It localises to the cytoskeleton. Its subcellular location is the microtubule organizing center. The protein localises to the centrosome. It is found in the centriole. It carries out the reaction L-seryl-[protein] + ATP = O-phospho-L-seryl-[protein] + ADP + H(+). The enzyme catalyses L-threonyl-[protein] + ATP = O-phospho-L-threonyl-[protein] + ADP + H(+). Serine/threonine-protein kinase that plays a central role in centriole duplication. Able to trigger procentriole formation on the surface of the parental centriole cylinder, leading to the recruitment of centriole biogenesis proteins such as sass6, cpap, ccp110, cep135 and gamma-tubulin. When overexpressed, it is able to induce centrosome amplification through the simultaneous generation of multiple procentrioles adjoining each parental centriole during S phase. Its central role in centriole replication suggests a possible role in tumorigenesis, centrosome aberrations being frequently observed in tumors. Also involved in deuterosome-mediated centriole amplification in multiciliated that can generate more than 100 centrioles. The sequence is that of Serine/threonine-protein kinase PLK4 from Xenopus laevis (African clawed frog).